The sequence spans 30 residues: Cycloviolacin-O2 (30 aa).

The cyclopeptide (Gly-Asn) cross-link spans 1 to 30 (GIPCGESCVWIPCISSAIGCSCKSKVCYRN). Disulfide bonds link cysteine 4–cysteine 20, cysteine 8–cysteine 22, and cysteine 13–cysteine 27.

Post-translationally, this is a cyclic peptide.

Probably participates in a plant defense mechanism. The sequence is that of Cycloviolacin-O2 from Viola biflora (Yellow wood violet).